We begin with the raw amino-acid sequence, 389 residues long: MKIHEYQGKEILRKFGVAVPRGKPVFSVDDAVKAAEELGGPVWVVKAQIHAGGRGKGGGVKVAKSLDQVREYSEQILGMQLVTHQTGPEGQKVNRLLIEEGADIKKELYVGLVIDRVSQKIVVMASSEGGMDVEEVAEKTPELIHKIAVDPATGLKDAEADELATKIGVPAASLPQARAILQGLYKAFWETDASLAEINPLILTGDGKVIALDAKFNFDSNALFRHPEIVAYRDLDEEDPAEVEASKFDLAYISLDGNIGCLVNGAGLAMATMDTIKLFGGEPANFLDVGGGATTEKVTEAFKIMLKNPNLTAILVNIFGGIMRCDVIAEGVIAASKAVSLKVPLVVRMKGTNEDLGKKMLAESGLPIIAADSMEEAAQKVVAAAAGKA.

Positions 9-244 (KEILRKFGVA…LDEEDPAEVE (236 aa)) constitute an ATP-grasp domain. Residues Lys-46, 53–55 (GRG), Glu-99, Ala-102, and Glu-107 each bind ATP. Mg(2+)-binding residues include Asn-199 and Asp-213. Substrate is bound by residues Asn-264 and 321-323 (GIM).

It belongs to the succinate/malate CoA ligase beta subunit family. In terms of assembly, heterotetramer of two alpha and two beta subunits. Mg(2+) is required as a cofactor.

It carries out the reaction succinate + ATP + CoA = succinyl-CoA + ADP + phosphate. The catalysed reaction is GTP + succinate + CoA = succinyl-CoA + GDP + phosphate. Its pathway is carbohydrate metabolism; tricarboxylic acid cycle; succinate from succinyl-CoA (ligase route): step 1/1. In terms of biological role, succinyl-CoA synthetase functions in the citric acid cycle (TCA), coupling the hydrolysis of succinyl-CoA to the synthesis of either ATP or GTP and thus represents the only step of substrate-level phosphorylation in the TCA. The beta subunit provides nucleotide specificity of the enzyme and binds the substrate succinate, while the binding sites for coenzyme A and phosphate are found in the alpha subunit. The chain is Succinate--CoA ligase [ADP-forming] subunit beta from Paraburkholderia phytofirmans (strain DSM 17436 / LMG 22146 / PsJN) (Burkholderia phytofirmans).